Here is a 262-residue protein sequence, read N- to C-terminus: Adenosylcobinamide-GDP ribazoletransferase (262 aa).

The next 6 membrane-spanning stretches (helical) occupy residues 43-63 (YFGL…WLTQ), 66-86 (LPAG…TGGF), 120-140 (GAIA…ELAL), 146-166 (AGSA…SIIF), 191-211 (LFIL…LAAL), and 242-262 (AAQQ…GSIL).

The protein belongs to the CobS family. It depends on Mg(2+) as a cofactor.

It is found in the cell inner membrane. It carries out the reaction alpha-ribazole + adenosylcob(III)inamide-GDP = adenosylcob(III)alamin + GMP + H(+). The enzyme catalyses alpha-ribazole 5'-phosphate + adenosylcob(III)inamide-GDP = adenosylcob(III)alamin 5'-phosphate + GMP + H(+). It participates in cofactor biosynthesis; adenosylcobalamin biosynthesis; adenosylcobalamin from cob(II)yrinate a,c-diamide: step 7/7. In terms of biological role, joins adenosylcobinamide-GDP and alpha-ribazole to generate adenosylcobalamin (Ado-cobalamin). Also synthesizes adenosylcobalamin 5'-phosphate from adenosylcobinamide-GDP and alpha-ribazole 5'-phosphate. In Shewanella putrefaciens (strain CN-32 / ATCC BAA-453), this protein is Adenosylcobinamide-GDP ribazoletransferase.